Consider the following 241-residue polypeptide: MNKTTLLYTGKAKQVYATDDPDVLWMAYTNQATALNGEKKAQIAHKGELNRAISTLLFKELTAVGIPTHYLDSPDSTTMIVKKAAMLPLEVVVRNYASGHFVTKFNVKPMMKLDPPIHEYYYKSDELGDPFMNEAQIFALHEATPEQLKQVRALTDRINTYLMQRFAAIGITLVDFKLEYGTLKDGTLVLADELSPDNFRLVDQQTGASLDKDVFRQNRGPLTPVYEEVLSRLQEKGAAHV.

The protein belongs to the SAICAR synthetase family.

It carries out the reaction 5-amino-1-(5-phospho-D-ribosyl)imidazole-4-carboxylate + L-aspartate + ATP = (2S)-2-[5-amino-1-(5-phospho-beta-D-ribosyl)imidazole-4-carboxamido]succinate + ADP + phosphate + 2 H(+). The protein operates within purine metabolism; IMP biosynthesis via de novo pathway; 5-amino-1-(5-phospho-D-ribosyl)imidazole-4-carboxamide from 5-amino-1-(5-phospho-D-ribosyl)imidazole-4-carboxylate: step 1/2. The polypeptide is Phosphoribosylaminoimidazole-succinocarboxamide synthase (Lacticaseibacillus casei (strain BL23) (Lactobacillus casei)).